The following is a 358-amino-acid chain: Protein-glutamate methylesterase/protein-glutamine glutaminase 3 (358 aa).

The region spanning 2–118 (KILVVDDSAL…CGRLQEVAPL (117 aa)) is the Response regulatory domain. D52 is subject to 4-aspartylphosphate. In terms of domain architecture, CheB-type methylesterase spans 155–325 (NNEDHQLAIM…VPSMPEALLK (171 aa)). Active-site residues include S167, H194, and D291.

This sequence belongs to the CheB family. Post-translationally, phosphorylated by CheA. Phosphorylation of the N-terminal regulatory domain activates the methylesterase activity.

It localises to the cytoplasm. The catalysed reaction is [protein]-L-glutamate 5-O-methyl ester + H2O = L-glutamyl-[protein] + methanol + H(+). It carries out the reaction L-glutaminyl-[protein] + H2O = L-glutamyl-[protein] + NH4(+). Its function is as follows. Involved in chemotaxis. Part of a chemotaxis signal transduction system that modulates chemotaxis in response to various stimuli. Catalyzes the demethylation of specific methylglutamate residues introduced into the chemoreceptors (methyl-accepting chemotaxis proteins or MCP) by CheR. Also mediates the irreversible deamidation of specific glutamine residues to glutamic acid. This chain is Protein-glutamate methylesterase/protein-glutamine glutaminase 3, found in Vibrio cholerae serotype O1 (strain ATCC 39315 / El Tor Inaba N16961).